The following is a 198-amino-acid chain: Recombination protein RecR (198 aa).

The C4-type zinc finger occupies 57–72 (CSVCGHITENDPCYIC). Positions 80–175 (SVICVVEDDK…KVTRLAQGLS (96 aa)) constitute a Toprim domain.

The protein belongs to the RecR family.

May play a role in DNA repair. It seems to be involved in an RecBC-independent recombinational process of DNA repair. It may act with RecF and RecO. This Staphylococcus epidermidis (strain ATCC 35984 / DSM 28319 / BCRC 17069 / CCUG 31568 / BM 3577 / RP62A) protein is Recombination protein RecR.